The following is a 380-amino-acid chain: MSKDSSLHPKYQMASNIPRETSFLVPKEPTRYLPFQMCQSPLVTPTRPLQSSHSVHERDLHQKDSQEPSRNSGSMPLSDKYYNKQSGPVATRKCRKERTVYSKEQKCLLQEHFHQCQNPDLEQRKALALLIGVTEYKIQTWFKNRRAKECRKSSQLPRRIGSGPHYRPTSSSGGEVPDFAASPDSVCQRHVNVSYPPEFRPSRNSPHQEFNSSLIDQPLEDMCFSKSHIISEHPRQKCRELSREPGHLSSDRSGCSNVLSSPSPAAGAESSCDIPSGLSLSPQLGPPSMTQNSESTFSMCQTPSVLSPLPELSPLSNSLDQMAIFSKIDQVCEIYQKNTRSKKQRKETEKNTVQNLMHGQDSCEITESPKGTVSLPSSAY.

5 disordered regions span residues 1-25 (MSKD…SFLV), 43-95 (VTPT…RKCR), 152-182 (KSSQ…FAAS), 234-303 (PRQK…CQTP), and 339-380 (TRSK…SSAY). Residues 43 to 53 (VTPTRPLQSSH) show a composition bias toward polar residues. Residues 54–67 (SVHERDLHQKDSQE) are compositionally biased toward basic and acidic residues. A DNA-binding region (homeobox) is located at residues 94–153 (CRKERTVYSKEQKCLLQEHFHQCQNPDLEQRKALALLIGVTEYKIQTWFKNRRAKECRKS). Residues 234–250 (PRQKCRELSREPGHLSS) are compositionally biased toward basic and acidic residues. Low complexity predominate over residues 260–271 (SSPSPAAGAESS). Polar residues-rich tracts occupy residues 278-302 (LSLS…MCQT) and 351-380 (NTVQ…SSAY).

It belongs to the paired homeobox family. Obox subfamily. As to expression, specifically expressed in early embryos.

It is found in the nucleus. Transcription factor required for zygotic genome activation (ZGA), a critical event in early embryonic development during which the developmental control passes from maternally provided mRNAs to the expression of the zygotic genome after fertilization. Cannot compensate for loss of other members of the Obox family, suggesting that its function differs from other Obox family members. May regulate expression of histone genes in embryonic stem cells. Also involved in completion of meiosis of oocytes during the meiosis-I/meiosis-II transition. Required to maintain the nuclear membrane of the germinal vesicle in oocytes. The polypeptide is Oocyte-specific homeobox protein 4 (Mus musculus (Mouse)).